The sequence spans 368 residues: Molybdenum import ATP-binding protein ModC (368 aa).

The ABC transporter domain maps to 1–230; it reads MTIKIQFKQT…HAMRPWQSFS (230 aa). 32-39 contributes to the ATP binding site; that stretch reads GRSGAGKT. The Mop domain maps to 291-362; the sequence is ATSIRNVLPA…VKGVSVTQRD (72 aa).

It belongs to the ABC transporter superfamily. Molybdate importer (TC 3.A.1.8) family. In terms of assembly, the complex is composed of two ATP-binding proteins (ModC), two transmembrane proteins (ModB) and a solute-binding protein (ModA).

The protein localises to the cell inner membrane. The enzyme catalyses molybdate(out) + ATP + H2O = molybdate(in) + ADP + phosphate + H(+). Its function is as follows. Part of the ABC transporter complex ModABC involved in molybdenum import. Responsible for energy coupling to the transport system. The chain is Molybdenum import ATP-binding protein ModC from Vibrio parahaemolyticus serotype O3:K6 (strain RIMD 2210633).